The chain runs to 781 residues: Translation initiation factor IF-2 (781 aa).

Residues Arg-44–Glu-195 are disordered. A compositionally biased stretch (basic and acidic residues) spans Thr-53–Thr-65. A compositionally biased stretch (polar residues) spans Ser-66–Thr-81. Residues Asn-82 to Pro-93 are compositionally biased toward low complexity. The span at Lys-115–Ser-126 shows a compositional bias: polar residues. Residues Gly-127–Gly-169 show a composition bias toward low complexity. The tr-type G domain occupies Glu-282–Lys-451. The G1 stretch occupies residues Gly-291–Thr-298. Gly-291–Thr-298 contributes to the GTP binding site. Residues Gly-316 to His-320 form a G2 region. Residues Asp-337 to Gly-340 form a G3 region. Residues Asp-337–His-341 and Asn-391–Asp-394 each bind GTP. Residues Asn-391–Asp-394 form a G4 region. The segment at Ser-427 to Lys-429 is G5.

This sequence belongs to the TRAFAC class translation factor GTPase superfamily. Classic translation factor GTPase family. IF-2 subfamily.

The protein localises to the cytoplasm. In terms of biological role, one of the essential components for the initiation of protein synthesis. Protects formylmethionyl-tRNA from spontaneous hydrolysis and promotes its binding to the 30S ribosomal subunits. Also involved in the hydrolysis of GTP during the formation of the 70S ribosomal complex. This is Translation initiation factor IF-2 from Listeria monocytogenes serotype 4a (strain HCC23).